The sequence spans 196 residues: 3-isopropylmalate dehydratase small subunit (196 aa).

The protein belongs to the LeuD family. LeuD type 1 subfamily. As to quaternary structure, heterodimer of LeuC and LeuD.

The enzyme catalyses (2R,3S)-3-isopropylmalate = (2S)-2-isopropylmalate. It participates in amino-acid biosynthesis; L-leucine biosynthesis; L-leucine from 3-methyl-2-oxobutanoate: step 2/4. Its function is as follows. Catalyzes the isomerization between 2-isopropylmalate and 3-isopropylmalate, via the formation of 2-isopropylmaleate. The polypeptide is 3-isopropylmalate dehydratase small subunit (Rhodopirellula baltica (strain DSM 10527 / NCIMB 13988 / SH1)).